The primary structure comprises 220 residues: Ribonuclease HII (220 aa).

The RNase H type-2 domain occupies 1–219; the sequence is MMIAGIDEAG…VENIREELKK (219 aa). Positions 7, 8, and 105 each coordinate a divalent metal cation.

The protein belongs to the RNase HII family. Mn(2+) is required as a cofactor. Requires Mg(2+) as cofactor.

The protein localises to the cytoplasm. It catalyses the reaction Endonucleolytic cleavage to 5'-phosphomonoester.. Its function is as follows. Endonuclease that specifically degrades the RNA of RNA-DNA hybrids. In Methanosarcina mazei (strain ATCC BAA-159 / DSM 3647 / Goe1 / Go1 / JCM 11833 / OCM 88) (Methanosarcina frisia), this protein is Ribonuclease HII.